A 399-amino-acid chain; its full sequence is DNA primase DnaG (399 aa).

A Toprim domain is found at 182–268 (DAIIVVEGRA…EVEDLTQKEI (87 aa)). 3 residues coordinate Mg(2+): E188, D230, and D232.

It belongs to the archaeal DnaG primase family. In terms of assembly, forms a ternary complex with MCM helicase and DNA. Component of the archaeal exosome complex. The cofactor is Mg(2+).

The enzyme catalyses ssDNA + n NTP = ssDNA/pppN(pN)n-1 hybrid + (n-1) diphosphate.. Its function is as follows. RNA polymerase that catalyzes the synthesis of short RNA molecules used as primers for DNA polymerase during DNA replication. Also part of the exosome, which is a complex involved in RNA degradation. Acts as a poly(A)-binding protein that enhances the interaction between heteromeric, adenine-rich transcripts and the exosome. The polypeptide is DNA primase DnaG (Archaeoglobus fulgidus (strain ATCC 49558 / DSM 4304 / JCM 9628 / NBRC 100126 / VC-16)).